An 88-amino-acid polypeptide reads, in one-letter code: Phosphocarrier protein HPr (88 aa).

The HPr domain occupies 1 to 88 (MKKFQAVIKD…KACLEKNKVI (88 aa)). The Pros-phosphohistidine intermediate role is filled by His-15. Phosphoserine; by HPrK/P is present on Ser-47.

The protein belongs to the HPr family.

The protein resides in the cytoplasm. With respect to regulation, phosphorylation on Ser-47 inhibits the phosphoryl transfer from enzyme I to HPr. Functionally, general (non sugar-specific) component of the phosphoenolpyruvate-dependent sugar phosphotransferase system (sugar PTS). This major carbohydrate active-transport system catalyzes the phosphorylation of incoming sugar substrates concomitantly with their translocation across the cell membrane. The phosphoryl group from phosphoenolpyruvate (PEP) is transferred to the phosphoryl carrier protein HPr by enzyme I. Phospho-HPr then transfers it to the PTS EIIA domain. P-Ser-HPr interacts with the catabolite control protein A (CcpA), forming a complex that binds to DNA at the catabolite response elements cre, operator sites preceding a large number of catabolite-regulated genes. Thus, P-Ser-HPr is a corepressor in carbon catabolite repression (CCR), a mechanism that allows bacteria to coordinate and optimize the utilization of available carbon sources. P-Ser-HPr also plays a role in inducer exclusion, in which it probably interacts with several non-PTS permeases and inhibits their transport activity. The protein is Phosphocarrier protein HPr (ptsH) of Mycoplasma genitalium (strain ATCC 33530 / DSM 19775 / NCTC 10195 / G37) (Mycoplasmoides genitalium).